The following is a 61-amino-acid chain: Small ribosomal subunit protein uS14 (61 aa).

Zn(2+) is bound by residues Cys24, Cys27, Cys40, and Cys43.

It belongs to the universal ribosomal protein uS14 family. Zinc-binding uS14 subfamily. In terms of assembly, part of the 30S ribosomal subunit. Contacts proteins S3 and S10. Requires Zn(2+) as cofactor.

Its function is as follows. Binds 16S rRNA, required for the assembly of 30S particles and may also be responsible for determining the conformation of the 16S rRNA at the A site. The polypeptide is Small ribosomal subunit protein uS14 (Mesoplasma florum (strain ATCC 33453 / NBRC 100688 / NCTC 11704 / L1) (Acholeplasma florum)).